The following is a 418-amino-acid chain: Gamma-glutamyl phosphate reductase (418 aa).

Belongs to the gamma-glutamyl phosphate reductase family.

It localises to the cytoplasm. It catalyses the reaction L-glutamate 5-semialdehyde + phosphate + NADP(+) = L-glutamyl 5-phosphate + NADPH + H(+). The protein operates within amino-acid biosynthesis; L-proline biosynthesis; L-glutamate 5-semialdehyde from L-glutamate: step 2/2. Its function is as follows. Catalyzes the NADPH-dependent reduction of L-glutamate 5-phosphate into L-glutamate 5-semialdehyde and phosphate. The product spontaneously undergoes cyclization to form 1-pyrroline-5-carboxylate. This chain is Gamma-glutamyl phosphate reductase, found in Geotalea uraniireducens (strain Rf4) (Geobacter uraniireducens).